Here is a 291-residue protein sequence, read N- to C-terminus: Nitrogenase iron protein (291 aa).

An ATP-binding site is contributed by 11 to 18 (GKGGIGKS). Cys-99 lines the [4Fe-4S] cluster pocket. Arg-102 bears the ADP-ribosylarginine; by dinitrogenase reductase ADP-ribosyltransferase mark. A [4Fe-4S] cluster-binding site is contributed by Cys-133.

It belongs to the NifH/BchL/ChlL family. Homodimer. Requires [4Fe-4S] cluster as cofactor. Post-translationally, the reversible ADP-ribosylation of Arg-102 inactivates the nitrogenase reductase and regulates nitrogenase activity.

The enzyme catalyses N2 + 8 reduced [2Fe-2S]-[ferredoxin] + 16 ATP + 16 H2O = H2 + 8 oxidized [2Fe-2S]-[ferredoxin] + 2 NH4(+) + 16 ADP + 16 phosphate + 6 H(+). In terms of biological role, the key enzymatic reactions in nitrogen fixation are catalyzed by the nitrogenase complex, which has 2 components: the iron protein and the molybdenum-iron protein. This chain is Nitrogenase iron protein, found in Cereibacter sphaeroides (strain ATCC 17023 / DSM 158 / JCM 6121 / CCUG 31486 / LMG 2827 / NBRC 12203 / NCIMB 8253 / ATH 2.4.1.) (Rhodobacter sphaeroides).